The primary structure comprises 561 residues: Sesquiterpene synthase TPS2 (561 aa).

The tract at residues 6 to 26 is disordered; that stretch reads ANGHSDVPSTQPPIGKQKKEI. (2E,6E)-farnesyl diphosphate is bound by residues Arg-277, Asp-314, Asp-318, Arg-455, and Asp-458. Residues Asp-314 and Asp-318 each contribute to the Mg(2+) site. The DDXXD motif signature appears at 314–318; it reads DDTYD. Mg(2+) is bound by residues Asp-458, Ser-462, and Glu-466.

It belongs to the terpene synthase family. Tpsa subfamily. In terms of assembly, monomer. The cofactor is Mg(2+).

It localises to the cytoplasm. It carries out the reaction (2E,6E)-farnesyl diphosphate = beta-ylangene + diphosphate. The catalysed reaction is (2E,6E)-farnesyl diphosphate = beta-copaene + diphosphate. It catalyses the reaction (2E,6E)-farnesyl diphosphate = beta-cubebene + diphosphate. It participates in secondary metabolite biosynthesis; terpenoid biosynthesis. Sesquiterpene synthase involved in the biosynthesis of volatile organic compounds. Mediates the conversion of (2E,6E)-farnesyl diphosphate (FPP) into beta-ylangene, beta-copaene and beta-cubebene. Does not use (2E)-geranyl diphosphate (GPP) as substrate. The sequence is that of Sesquiterpene synthase TPS2 from Cananga odorata (Ylang-ylang tree).